A 481-amino-acid polypeptide reads, in one-letter code: Guanine nucleotide exchange factor C9orf72 homolog (481 aa).

A uDENN C9ORF72-type domain is found at 23–194 (SPLLAATFAY…ELLASMKSHS (172 aa)). The 144-residue stretch at 200–343 (DIADTVLNDD…SELTAFWRAT (144 aa)) folds into the cDENN C9ORF72-type domain. The dDENN C9ORF72-type domain maps to 370–464 (VLHRDTLVKA…IKPGLHSFIF (95 aa)). Residues 461–481 (SFIFGRPFYTSVQERDVLMTF) form a required for the homodimerization of the C9orf72-SMCR8 complex region.

As to quaternary structure, component of the C9orf72-SMCR8 complex, at least composed of C9orf72, SMCR8 and WDR41. The complex is formed of two protomers, each individually consisting of one molecule each of C9orf72, SMCR8 and WDR41. The protomers homodimerize via an interaction between C9orf72 (via C-terminus) and SMCR8 (via N-terminus). Within each protomer SMCR8 (via DENN domain) acts as a bridging protein between WDR41 (via C-terminus and N-terminus) and C9orf72 (via C-terminus). The C9orf72-SMCR8 complex associates with the ULK1/ATG1 kinase complex. Interacts with ULK1/ATG1 kinase complex members ULK1, ATG13 and RB1CC1. Interacts with SMCR8; the interaction is direct. Interacts with HNRNPA1, HNRNPA2B1 and UBQLN2. Interacts with small Rab GTPase RAB1A; the interaction mediates recruitment of RAB1A to the ULK1/ATG1 kinase complex. Also interacts with small Rab GTPase RAB7A. Interacts with cofilin. Interacts with GTP-binding proteins ARF1 and ARF6. Interacts with the DLG4/PSD-95. Interacts with CARM1 (via PH domain-like fold). Interacts with RAB39A and RAB39B (in GDP-bound forms); functions as GEF for RAB39A and RAB39B. Expressed in postnatal cerebellum and cortex (at protein level). Neuronal expression is detected in several regions of the adult brain and spinal cord. Prominent expression also observed in embryonic and early postnatal neurons including retinal ganglion cells, sensory neurons in the olfactory epithelium and in dorsal root ganglia, and spinal motor neurons. Expressed in the developing cerebral cortex, cerebellum, olfactory bulb, hippocampus and spinal cord in the embryo and in P0 cortical neurons and astrocytes. Also expressed in non-neuronal tissues such as kidney and tooth. In the spleen, highly expressed in myeloid cells compared to B cell and T cell populations where expression is much lower. In the brain, highly expressed in microglia. As to expression, expressed in the forebrain, including in the glomerular layer of the olfactory bulb (at protein level).

It localises to the nucleus. The protein localises to the cytoplasm. It is found in the P-body. Its subcellular location is the stress granule. The protein resides in the endosome. It localises to the lysosome. The protein localises to the cytoplasmic vesicle. It is found in the autophagosome. Its subcellular location is the autolysosome. The protein resides in the secreted. It localises to the cell projection. The protein localises to the axon. It is found in the growth cone. Its subcellular location is the perikaryon. The protein resides in the dendrite. It localises to the presynapse. The protein localises to the postsynapse. Its function is as follows. Acts as a guanine-nucleotide releasing factor (GEF) for Rab GTPases by promoting the conversion of inactive RAB-GDP to the active form RAB-GTP. Acts as a GEF for RAB39A which enables HOPS-mediated autophagosome-lysosome membrane tethering and fusion in mammalian autophagy. Component of the C9orf72-SMCR8 complex where both subunits display GEF activity and that regulates autophagy. As part of the C9orf72-SMCR8-WDR41 (CSW) complex, functions as GEF for RAB8A, and RAB39B, thereby promoting autophagosome maturation. As part of the C9orf72-SMCR8 complex, also functions as GTPase activating protein (GAP) for RAB8A and RAB11A in vitro. The C9orf72-SMCR8 complex also acts as a regulator of autophagy initiation by interacting with the ULK1/ATG1 kinase complex and modulating its protein kinase activity. Promotes initiation of autophagy by regulating the RAB1A-dependent trafficking of the ULK1/ATG1 kinase complex to the phagophore which leads to autophagosome formation. Acts as a regulator of mTORC1 signaling by promoting phosphorylation of mTORC1 substrates. Plays a role in endosomal trafficking. May be involved in regulating the maturation of phagosomes to lysosomes. Promotes the lysosomal localization and lysosome-mediated degradation of CARM1 which leads to inhibition of starvation-induced lipid metabolism. Regulates actin dynamics in motor neurons by inhibiting the GTP-binding activity of ARF6, leading to ARF6 inactivation. This reduces the activity of the LIMK1 and LIMK2 kinases which are responsible for phosphorylation and inactivation of CFL1/cofilin, leading to cofilin activation. Positively regulates axon extension and axon growth cone size in spinal motor neurons. Required for SMCR8 protein expression and localization at pre- and post-synaptic compartments in the forebrain, also regulates protein abundance of RAB3A and GRIA1/GLUR1 in post-synaptic compartments in the forebrain and hippocampus. Plays a role within the hematopoietic system in restricting inflammation and the development of autoimmunity. This chain is Guanine nucleotide exchange factor C9orf72 homolog, found in Mus musculus (Mouse).